A 164-amino-acid polypeptide reads, in one-letter code: Glycine cleavage system H protein, mitochondrial (164 aa).

Residues 1-39 constitute a mitochondrion transit peptide; it reads MAWLVLRRLGPVLAPRCPRLSLRPQVPAVRRLGTGSLLL. The Lipoyl-binding domain maps to 57–139; sequence IGTVGISNFA…YQDGWLIKMT (83 aa). Residue Lys-98 is modified to N6-lipoyllysine.

Belongs to the GcvH family. The glycine cleavage system is composed of four proteins: P (GLDC), T (GCST), L (DLD) and H (GCSH). Interacts with GLDC. (R)-lipoate is required as a cofactor.

The protein localises to the mitochondrion. Its function is as follows. The glycine cleavage system catalyzes the degradation of glycine. The H protein (GCSH) shuttles the methylamine group of glycine from the P protein (GLDC) to the T protein (GCST). Has a pivotal role in the lipoylation of enzymes involved in cellular energetics such as the mitochondrial dihydrolipoyllysine-residue acetyltransferase component of pyruvate dehydrogenase complex (DLAT), and the mitochondrial dihydrolipoyllysine-residue succinyltransferase component of 2-oxoglutarate dehydrogenase complex (DLST). This is Glycine cleavage system H protein, mitochondrial from Gallus gallus (Chicken).